The sequence spans 333 residues: Viral cathepsin (333 aa).

The signal sequence occupies residues 1–20 (MTKLLNFVILASVLTVTAHA). Positions 21-124 (LTYDLNNSDE…VIKDEPQALL (104 aa)) are cleaved as a propeptide — activation peptide. Intrachain disulfides connect Cys145/Cys186, Cys179/Cys219, and Cys272/Cys321. Cys148 is an active-site residue. An N-linked (GlcNAc...) asparagine; by host glycan is attached at Asn170. Active-site residues include His280 and Asn300.

The protein belongs to the peptidase C1 family. Synthesized as an inactive proenzyme and activated by proteolytic removal of the inhibitory propeptide.

The catalysed reaction is Endopeptidase of broad specificity, hydrolyzing substrates of both cathepsin L and cathepsin B.. Cysteine protease that plays an essential role in host liquefaction to facilitate horizontal transmission of the virus. May participate in the degradation of foreign protein expressed by the baculovirus system. The sequence is that of Viral cathepsin (VCATH) from Cydia pomonella granulosis virus (isolate Mexico/1963) (CpGV).